The following is a 199-amino-acid chain: Adenylyl-sulfate kinase (199 aa).

Position 31-38 (Gly-31–Ser-38) interacts with ATP. The active-site Phosphoserine intermediate is the Ser-105.

The protein belongs to the APS kinase family.

The enzyme catalyses adenosine 5'-phosphosulfate + ATP = 3'-phosphoadenylyl sulfate + ADP + H(+). Its pathway is sulfur metabolism; hydrogen sulfide biosynthesis; sulfite from sulfate: step 2/3. Its function is as follows. Catalyzes the synthesis of activated sulfate. The polypeptide is Adenylyl-sulfate kinase (Marinobacter nauticus (strain ATCC 700491 / DSM 11845 / VT8) (Marinobacter aquaeolei)).